Reading from the N-terminus, the 96-residue chain is Large ribosomal subunit protein eL21 (96 aa).

It belongs to the eukaryotic ribosomal protein eL21 family.

In Methanothrix thermoacetophila (strain DSM 6194 / JCM 14653 / NBRC 101360 / PT) (Methanosaeta thermophila), this protein is Large ribosomal subunit protein eL21.